The primary structure comprises 467 residues: 3-isopropylmalate dehydratase large subunit (467 aa).

[4Fe-4S] cluster-binding residues include C347, C407, and C410.

The protein belongs to the aconitase/IPM isomerase family. LeuC type 1 subfamily. As to quaternary structure, heterodimer of LeuC and LeuD. The cofactor is [4Fe-4S] cluster.

The catalysed reaction is (2R,3S)-3-isopropylmalate = (2S)-2-isopropylmalate. It participates in amino-acid biosynthesis; L-leucine biosynthesis; L-leucine from 3-methyl-2-oxobutanoate: step 2/4. In terms of biological role, catalyzes the isomerization between 2-isopropylmalate and 3-isopropylmalate, via the formation of 2-isopropylmaleate. In Prochlorococcus marinus (strain MIT 9301), this protein is 3-isopropylmalate dehydratase large subunit.